The chain runs to 228 residues: Trichome differentiation protein GL1 (228 aa).

HTH myb-type domains follow at residues 11–63 and 64–118; these read NQEY…MNYL and SPNV…SKKL. 2 DNA-binding regions (H-T-H motif) span residues 39–63 and 91–114; these read WNRI…MNYL and WSLI…NTHL.

In terms of assembly, homodimer and heterodimer with MYB82. Interacts directly with GL3 and BHLH2. Part of a complex made of GL1, GL3 or BHLH2, and TTG1. Also interacts with BHLH2/EGL3/MYC146 and BHLH12/MYC1. Interacts with MYB82. As to expression, expressed in leaves, stems and flowers. Expressed in trichome cells and in leaf primordia.

It is found in the nucleus. Transcription activator, when associated with BHLH2/EGL3/MYC146 or BHLH12/MYC1. Involved in epidermal cell fate specification in leaves. Together with TTG1 and GL3, promotes trichome formation and endoreplication. Regulates the production of a signal that induces hair (trichome) precursor cells on leaf primordia to differentiate. Binds to the WER-binding sites (WBS) promoter regions and activates the transcription of target genes. The polypeptide is Trichome differentiation protein GL1 (Arabidopsis thaliana (Mouse-ear cress)).